Consider the following 381-residue polypeptide: Homoserine O-succinyltransferase (381 aa).

Residues 45–360 (NAVLVCHALN…PHGHDAFLLD (316 aa)) enclose the AB hydrolase-1 domain. Catalysis depends on serine 151, which acts as the Nucleophile. Residue arginine 221 participates in substrate binding. Catalysis depends on residues aspartate 321 and histidine 354. Aspartate 355 is a substrate binding site.

It belongs to the AB hydrolase superfamily. MetX family. As to quaternary structure, homodimer.

The protein resides in the cytoplasm. The catalysed reaction is L-homoserine + succinyl-CoA = O-succinyl-L-homoserine + CoA. It participates in amino-acid biosynthesis; L-methionine biosynthesis via de novo pathway; O-succinyl-L-homoserine from L-homoserine: step 1/1. Transfers a succinyl group from succinyl-CoA to L-homoserine, forming succinyl-L-homoserine. This chain is Homoserine O-succinyltransferase, found in Burkholderia ambifaria (strain ATCC BAA-244 / DSM 16087 / CCUG 44356 / LMG 19182 / AMMD) (Burkholderia cepacia (strain AMMD)).